A 113-amino-acid polypeptide reads, in one-letter code: Hydrogenase maturation factor HypA (113 aa).

Residue His-2 participates in Ni(2+) binding. Zn(2+) contacts are provided by Cys-73, Cys-76, Cys-89, and Cys-92.

It belongs to the HypA/HybF family.

Its function is as follows. Involved in the maturation of [NiFe] hydrogenases. Required for nickel insertion into the metal center of the hydrogenase. This is Hydrogenase maturation factor HypA from Albidiferax ferrireducens (strain ATCC BAA-621 / DSM 15236 / T118) (Rhodoferax ferrireducens).